A 192-amino-acid polypeptide reads, in one-letter code: Adenylate kinase (192 aa).

ATP is bound at residue 10-15 (GAGKGT). An NMP region spans residues 30-59 (STGDMLREAIEKETEIGKQAKIFIESGALV). Residues threonine 31, arginine 36, 57–59 (ALV), 85–88 (GYPR), and glutamine 92 each bind AMP. The interval 126–142 (KRVEEVVAVGGKIRSDD) is LID. Arginine 127 provides a ligand contact to ATP. 2 residues coordinate AMP: arginine 139 and arginine 150. Alanine 178 serves as a coordination point for ATP.

Belongs to the adenylate kinase family. As to quaternary structure, monomer.

The protein resides in the cytoplasm. The enzyme catalyses AMP + ATP = 2 ADP. It functions in the pathway purine metabolism; AMP biosynthesis via salvage pathway; AMP from ADP: step 1/1. Its function is as follows. Catalyzes the reversible transfer of the terminal phosphate group between ATP and AMP. Plays an important role in cellular energy homeostasis and in adenine nucleotide metabolism. This Bartonella bacilliformis (strain ATCC 35685 / KC583 / Herrer 020/F12,63) protein is Adenylate kinase.